A 213-amino-acid polypeptide reads, in one-letter code: Methylthioribulose-1-phosphate dehydratase (213 aa).

Zn(2+) is bound by residues histidine 97 and histidine 99.

The protein belongs to the aldolase class II family. MtnB subfamily. In terms of assembly, homotetramer. Zn(2+) serves as cofactor.

The catalysed reaction is 5-(methylsulfanyl)-D-ribulose 1-phosphate = 5-methylsulfanyl-2,3-dioxopentyl phosphate + H2O. Its pathway is amino-acid biosynthesis; L-methionine biosynthesis via salvage pathway; L-methionine from S-methyl-5-thio-alpha-D-ribose 1-phosphate: step 2/6. Catalyzes the dehydration of methylthioribulose-1-phosphate (MTRu-1-P) into 2,3-diketo-5-methylthiopentyl-1-phosphate (DK-MTP-1-P). This is Methylthioribulose-1-phosphate dehydratase from Geobacillus sp. (strain WCH70).